The sequence spans 219 residues: 3-dehydroquinate dehydratase (219 aa).

3-dehydroquinate-binding positions include 28 to 30 and Arg-61; that span reads ELR. His-116 (proton donor/acceptor) is an active-site residue. Residue Lys-142 is the Schiff-base intermediate with substrate of the active site. Positions 180 and 203 each coordinate 3-dehydroquinate.

The protein belongs to the type-I 3-dehydroquinase family. In terms of assembly, homodimer.

It catalyses the reaction 3-dehydroquinate = 3-dehydroshikimate + H2O. The protein operates within metabolic intermediate biosynthesis; chorismate biosynthesis; chorismate from D-erythrose 4-phosphate and phosphoenolpyruvate: step 3/7. Involved in the third step of the chorismate pathway, which leads to the biosynthesis of aromatic amino acids. Catalyzes the cis-dehydration of 3-dehydroquinate (DHQ) and introduces the first double bond of the aromatic ring to yield 3-dehydroshikimate. This Aquifex aeolicus (strain VF5) protein is 3-dehydroquinate dehydratase.